The sequence spans 175 residues: ALAGAIIAGASLTFQILDKVLAELGQVSRKIAIGIDNESGGSWTAMNAYFRSGTTDVILPEFVPNQKALLYSGRKNRGPDTTGAVGALAYYMSNGNTLGVMFSVPFDYNLYSNWWDVKVYSGKRRADQAMYEDLYYSNPYRGDNGWHQKNLGYGLKMKGIMTSAGEAIMEIRISR.

The segment at 1–10 (ALAGAIIAGA) is plays an important role in the hemolytic activity. Residues 9–28 (GASLTFQILDKVLAELGQVS) form an N-terminal region region. Phosphocholine is bound by residues Ser-52, Val-85, Ser-103, Pro-105, Tyr-131, Tyr-135, and Tyr-136. Residues 103 to 118 (SVPFDYNLYSNWWDVK) form a trp-rich region, which is important for the binding to lipid membrane region.

It belongs to the actinoporin family. Sea anemone subfamily. Octamer or nonamer in membranes. Monomer in the soluble state.

Its subcellular location is the secreted. The protein resides in the nematocyst. The protein localises to the target cell membrane. Functionally, pore-forming protein that forms cations-selective hydrophilic pores of around 1 nm and causes cardiac stimulation and cytolysis. Pore formation is a multi-step process that involves specific recognition of membrane sphingomyelin (but neither cholesterol nor phosphatidylcholine) using aromatic rich region and adjacent phosphocholine (POC) binding site, firm binding to the membrane (mainly driven by hydrophobic interactions) accompanied by the transfer of the N-terminal region to the lipid-water interface and finally pore formation after oligomerization of monomers. The polypeptide is DELTA-stichotoxin-Hcr4a (Radianthus crispa (Leathery sea anemone)).